The chain runs to 141 residues: MFGISFSELLLVGLVALLVLGPERLPGAARTAGLWIGRLKRSFNTIKQEVEREIGADEIRRQLHNEHILSMEREAQKLLAPLTGQNPPQETPPPAAESPAPSVPTPPPTSTPAVPPADAAAPPAVAASTPPSPPSETPRNP.

The helical transmembrane segment at 1–21 threads the bilayer; the sequence is MFGISFSELLLVGLVALLVLG. Residues 74–141 form a disordered region; that stretch reads EAQKLLAPLT…SPPSETPRNP (68 aa). Pro residues predominate over residues 89 to 115; sequence QETPPPAAESPAPSVPTPPPTSTPAVP. A compositionally biased stretch (low complexity) spans 116 to 129; the sequence is PADAAAPPAVAAST. Pro residues predominate over residues 130–141; the sequence is PPSPPSETPRNP.

Belongs to the TatB family. The Tat system comprises two distinct complexes: a TatABC complex, containing multiple copies of TatA, TatB and TatC subunits, and a separate TatA complex, containing only TatA subunits. Substrates initially bind to the TatABC complex, which probably triggers association of the separate TatA complex to form the active translocon.

Its subcellular location is the cell inner membrane. In terms of biological role, part of the twin-arginine translocation (Tat) system that transports large folded proteins containing a characteristic twin-arginine motif in their signal peptide across membranes. Together with TatC, TatB is part of a receptor directly interacting with Tat signal peptides. TatB may form an oligomeric binding site that transiently accommodates folded Tat precursor proteins before their translocation. The sequence is that of Sec-independent protein translocase protein TatB from Pseudomonas aeruginosa (strain ATCC 15692 / DSM 22644 / CIP 104116 / JCM 14847 / LMG 12228 / 1C / PRS 101 / PAO1).